The chain runs to 559 residues: Sesquiterpene synthase TPS3 (559 aa).

(2E,6E)-farnesyl diphosphate is bound by residues Arg-275, Asp-312, Asp-316, Arg-453, and Asp-456. Mg(2+)-binding residues include Asp-312 and Asp-316. The DDXXD motif signature appears at 312-316 (DDTYD). Mg(2+) contacts are provided by Asp-456, Thr-460, and Glu-464.

Belongs to the terpene synthase family. Tpsa subfamily. In terms of assembly, monomer. The cofactor is Mg(2+). Highly expressed in glandular trichomes. Expressed in roots and leaves.

Its subcellular location is the cytoplasm. The enzyme catalyses (2E,6E)-farnesyl diphosphate = (+)-(R)-germacrene A + diphosphate. It functions in the pathway secondary metabolite biosynthesis; terpenoid biosynthesis. Its function is as follows. Sesquiterpene synthase involved in the biosynthesis of volatile compounds. Mediates the conversion of (2E,6E)-farnesyl diphosphate (FPP) into (+)-(R)-germacrene A. The protein is Sesquiterpene synthase TPS3 of Xanthium strumarium (Rough cocklebur).